A 1534-amino-acid chain; its full sequence is ABC transporter G family member 6 (1534 aa).

Over residues 1–11 (MAKQDPKDKNS) the composition is skewed to basic and acidic residues. The tract at residues 1 to 85 (MAKQDPKDKN…ESNYDSDDEK (85 aa)) is disordered. Low complexity predominate over residues 21–65 (NNNNNENLDNDQELLNNNNNNNNNNNNNNNNNNNNNNNNNNNNNL). Residues 138–385 (VYCRNATYTV…FKKLGFACPS (248 aa)) enclose the ABC transporter 1 domain. An ATP-binding site is contributed by 177–184 (GTPGCGKS). An ABC transmembrane type-2 1 domain is found at 481–757 (RRNYYNFLTR…VVCFFALKYF (277 aa)). The next 7 helical transmembrane spans lie at 486 to 506 (NFLT…TLYW), 521 to 541 (LLFF…NSFF), 566 to 586 (IICD…IVYW), 592 to 612 (PVFI…NLSL), 625 to 645 (IEIA…FSGF), 652 to 672 (IGGW…FQGL), and 734 to 754 (VVFG…FFAL). The segment at 781 to 907 (KQDEESAAIS…KSKNGKDIGS (127 aa)) is disordered. A compositionally biased stretch (acidic residues) spans 797–808 (IDDDNDDDADYE). The span at 830–841 (SPSSLTTGSPYY) shows a compositional bias: polar residues. Residues 842–856 (NINNNNNNLSGSGNN) are compositionally biased toward low complexity. Polar residues predominate over residues 864–873 (TPSNLSPSVN). Positions 874 to 896 (SPITINSPMPTSPSNNNNNNNSN) are enriched in low complexity. Residues 897–906 (EKSKNGKDIG) are compositionally biased toward basic and acidic residues. Residues 924–1166 (VKVDDPDNPK…VILDYCDKLG (243 aa)) form the ABC transporter 2 domain. 960–967 (GPSGAGKS) contacts ATP. The ABC transmembrane type-2 2 domain maps to 1256–1529 (LRRPAIFVSN…GLSFWGFKKI (274 aa)). 6 helical membrane-spanning segments follow: residues 1261–1281 (IFVS…TLFV), 1296–1316 (LLFF…PTTV), 1345–1365 (YPFT…IAGL), 1377–1397 (CLFI…CLAV), 1404–1424 (MAST…GFVI), and 1506–1526 (IDIA…FWGF).

It belongs to the ABC transporter superfamily. ABCG family. PDR (TC 3.A.1.205) subfamily.

Its subcellular location is the membrane. The chain is ABC transporter G family member 6 (abcG6) from Dictyostelium discoideum (Social amoeba).